Reading from the N-terminus, the 302-residue chain is F-box protein SKIP19 (302 aa).

One can recognise an F-box domain in the interval 16–63 (STNWTELPPELTSAILHRLGAIEILENAQKVCRSWRRVCKDPSMWRKI).

As to quaternary structure, part of a SCF (ASK-cullin-F-box) protein ligase complex. Interacts with CUL1 and SPK1B/ASK2.

The protein localises to the nucleus. It participates in protein modification; protein ubiquitination. Component of SCF(ASK-cullin-F-box) E3 ubiquitin ligase complexes, which may mediate the ubiquitination and subsequent proteasomal degradation of target proteins. The chain is F-box protein SKIP19 (SKIP19) from Arabidopsis thaliana (Mouse-ear cress).